Here is a 257-residue protein sequence, read N- to C-terminus: MAAAHRVSHEPAYVLHRYDWSESSLILEVFTRHHGRIALVAKGAKRPSSNFRPVLLPLQPLQLNYGGDAEIRTLKGAEWMGGHVMPTGEALLSGYYVNELLLRLLARDDAHEALFDAYAGVVQVLAGDHAGAQAATQAAALRAFELLLLREVGLLPSLDVQTLTLEPLVADARYTLVPEAGLRLAAEGEAALSGADWQSLQGVLDDRAPFTATLREIATMNAGSNSALRNQLRALLNYHCGVSTLRTRQMMRDLQAL.

It belongs to the RecO family.

Involved in DNA repair and RecF pathway recombination. The polypeptide is DNA repair protein RecO (Variovorax paradoxus (strain S110)).